A 203-amino-acid polypeptide reads, in one-letter code: Small ribosomal subunit protein uS4 (203 aa).

The S4 RNA-binding domain maps to 93–156 (RRLDNVVYRL…LKVPAILEAV (64 aa)).

Belongs to the universal ribosomal protein uS4 family. As to quaternary structure, part of the 30S ribosomal subunit. Contacts protein S5. The interaction surface between S4 and S5 is involved in control of translational fidelity.

In terms of biological role, one of the primary rRNA binding proteins, it binds directly to 16S rRNA where it nucleates assembly of the body of the 30S subunit. With S5 and S12 plays an important role in translational accuracy. The polypeptide is Small ribosomal subunit protein uS4 (Streptococcus gordonii (strain Challis / ATCC 35105 / BCRC 15272 / CH1 / DL1 / V288)).